The sequence spans 445 residues: Tubulin beta-7 chain (445 aa).

The GTP site is built by Gln11, Glu69, Ser138, Gly142, Thr143, Gly144, Asn204, and Asn226. Glu69 contacts Mg(2+). Residues 421–445 (EYQQYQDATAEDEEYEEEEEEEEET) are disordered. A compositionally biased stretch (acidic residues) spans 429–445 (TAEDEEYEEEEEEEEET).

Belongs to the tubulin family. In terms of assembly, dimer of alpha and beta chains. A typical microtubule is a hollow water-filled tube with an outer diameter of 25 nm and an inner diameter of 15 nM. Alpha-beta heterodimers associate head-to-tail to form protofilaments running lengthwise along the microtubule wall with the beta-tubulin subunit facing the microtubule plus end conferring a structural polarity. Microtubules usually have 13 protofilaments but different protofilament numbers can be found in some organisms and specialized cells. Requires Mg(2+) as cofactor.

It is found in the cytoplasm. The protein resides in the cytoskeleton. In terms of biological role, tubulin is the major constituent of microtubules, a cylinder consisting of laterally associated linear protofilaments composed of alpha- and beta-tubulin heterodimers. Microtubules grow by the addition of GTP-tubulin dimers to the microtubule end, where a stabilizing cap forms. Below the cap, tubulin dimers are in GDP-bound state, owing to GTPase activity of alpha-tubulin. This is Tubulin beta-7 chain (TUBB7) from Zea mays (Maize).